Consider the following 419-residue polypeptide: Gamma-glutamyl phosphate reductase (419 aa).

Belongs to the gamma-glutamyl phosphate reductase family.

It is found in the cytoplasm. It carries out the reaction L-glutamate 5-semialdehyde + phosphate + NADP(+) = L-glutamyl 5-phosphate + NADPH + H(+). It functions in the pathway amino-acid biosynthesis; L-proline biosynthesis; L-glutamate 5-semialdehyde from L-glutamate: step 2/2. Functionally, catalyzes the NADPH-dependent reduction of L-glutamate 5-phosphate into L-glutamate 5-semialdehyde and phosphate. The product spontaneously undergoes cyclization to form 1-pyrroline-5-carboxylate. The polypeptide is Gamma-glutamyl phosphate reductase (Yersinia pseudotuberculosis serotype O:1b (strain IP 31758)).